The sequence spans 36 residues: uncharacterized protein (36 aa).

Its subcellular location is the mitochondrion. This is an uncharacterized protein from Saccharomyces cerevisiae (strain ATCC 204508 / S288c) (Baker's yeast).